A 632-amino-acid chain; its full sequence is Probable potassium transport system protein Kup 1 (632 aa).

Transmembrane regions (helical) follow at residues 19–39 (LVLG…LYAL), 59–79 (VISM…VVFV), 110–130 (VLMM…VITP), 146–166 (PQLS…LFLI), 178–198 (FGPI…LHLV), 213–233 (ITFL…VFLV), 256–276 (WFVL…AMLL), 298–318 (MVLL…SGAF), 346–366 (IYLP…VISF), 373–393 (AAAY…LAAV), 403–423 (PALV…FFAA), and 428–448 (VAEG…LLMT).

The protein belongs to the HAK/KUP transporter (TC 2.A.72) family.

The protein localises to the cell inner membrane. The catalysed reaction is K(+)(in) + H(+)(in) = K(+)(out) + H(+)(out). In terms of biological role, transport of potassium into the cell. Likely operates as a K(+):H(+) symporter. This is Probable potassium transport system protein Kup 1 from Cupriavidus necator (strain ATCC 17699 / DSM 428 / KCTC 22496 / NCIMB 10442 / H16 / Stanier 337) (Ralstonia eutropha).